Consider the following 294-residue polypeptide: N-acetylmuramic acid 6-phosphate etherase (294 aa).

In terms of domain architecture, SIS spans Val54–Lys217. Residue Glu82 is the Proton donor of the active site. The active site involves Glu113.

The protein belongs to the GCKR-like family. MurNAc-6-P etherase subfamily. As to quaternary structure, homodimer.

The catalysed reaction is N-acetyl-D-muramate 6-phosphate + H2O = N-acetyl-D-glucosamine 6-phosphate + (R)-lactate. It participates in amino-sugar metabolism; N-acetylmuramate degradation. Its function is as follows. Specifically catalyzes the cleavage of the D-lactyl ether substituent of MurNAc 6-phosphate, producing GlcNAc 6-phosphate and D-lactate. This Bacillus cereus (strain ATCC 10987 / NRS 248) protein is N-acetylmuramic acid 6-phosphate etherase.